Consider the following 248-residue polypeptide: tRNA (guanine-N(1)-)-methyltransferase (248 aa).

S-adenosyl-L-methionine-binding positions include glycine 113 and 133-138 (IGDYVL).

Belongs to the RNA methyltransferase TrmD family. In terms of assembly, homodimer.

It is found in the cytoplasm. It carries out the reaction guanosine(37) in tRNA + S-adenosyl-L-methionine = N(1)-methylguanosine(37) in tRNA + S-adenosyl-L-homocysteine + H(+). Functionally, specifically methylates guanosine-37 in various tRNAs. This Shewanella halifaxensis (strain HAW-EB4) protein is tRNA (guanine-N(1)-)-methyltransferase.